The primary structure comprises 749 residues: Chaperone protein DnaK 1 (749 aa).

T198 is subject to Phosphothreonine; by autocatalysis. Basic and acidic residues-rich tracts occupy residues 643 to 653 (RWDADPWDRSR), 661 to 694 (YDDR…RDRN), and 711 to 724 (PTWE…RDRS). A disordered region spans residues 643 to 749 (RWDADPWDRS…GWDDDDDEWF (107 aa)). Over residues 740 to 749 (GWDDDDDEWF) the composition is skewed to acidic residues.

The protein belongs to the heat shock protein 70 family.

Functionally, acts as a chaperone. This is Chaperone protein DnaK 1 from Synechococcus sp. (strain ATCC 27144 / PCC 6301 / SAUG 1402/1) (Anacystis nidulans).